The following is a 443-amino-acid chain: Cyclic AMP receptor 4 (443 aa).

Residues 1 to 11 (MKVLQEINLTY) are Extracellular-facing. Asparagine 8 carries an N-linked (GlcNAc...) asparagine glycan. A helical transmembrane segment spans residues 12–32 (SILVIADFSSIFGCLLVLIAF). Topologically, residues 33 to 44 (KKLKLLRNHITR) are cytoplasmic. Residues 45–65 (VIACFCVSSLLKDIISTGLTL) traverse the membrane as a helical segment. The Extracellular segment spans residues 66-89 (SLGPQNEAGSTSFQCYLYAITITY). The chain crosses the membrane as a helical span at residues 90–110 (GSLACWLWTLCLAFSIYNLIV). Residues 111–119 (KREPEPEKY) lie on the Cytoplasmic side of the membrane. A helical transmembrane segment spans residues 120 to 140 (EKFYHGVCWTIPLICVIVMLA). Residues 141 to 161 (KKTIEPVGNWCWISEKYVGYR) lie on the Extracellular side of the membrane. A helical transmembrane segment spans residues 162–182 (FGLFYGPFFAIWIISAVLVGL). Topologically, residues 183 to 208 (TSRYTYSVIRNSVSDNKDKHMTYQFK) are cytoplasmic. The chain crosses the membrane as a helical span at residues 209–229 (LINYIIVFLLCWVFAIVNRIL). The Extracellular segment spans residues 230 to 263 (NGLGYYPTLPNILHTYFSVSHGFFASVTFIYNNP). Residues 264-284 (LMWRYWGSKIFLIFAKFGYFV) form a helical membrane-spanning segment. At 285-443 (ELQRRLDRNK…DEREKKDNKF (159 aa)) the chain is on the cytoplasmic side. 2 disordered regions span residues 325-354 (NDIS…QQSP) and 396-443 (SFEI…DNKF). The segment covering 332–352 (QQQQQQQQTPQQPQQQFQQQQ) has biased composition (low complexity). Positions 396–410 (SFEITQPSNDLNTIE) are enriched in polar residues. Positions 411 to 425 (NNNNYNNNNNNNNNN) are enriched in low complexity. Positions 429–443 (IEKEKDEREKKDNKF) are enriched in basic and acidic residues.

The protein belongs to the G-protein coupled receptor 5 family. In terms of processing, C-terminal Ser or Thr residues may be phosphorylated.

It localises to the membrane. In terms of biological role, receptor for cAMP. Regulates axial patterning and cellular differentiation during late development. The activity of this receptor is mediated by G proteins. The polypeptide is Cyclic AMP receptor 4 (carD) (Dictyostelium discoideum (Social amoeba)).